The sequence spans 647 residues: MASLVSLELGLLLAVLVVTATASPPAGLLSLLTSGQGALDQEALGGLLNTLADRVHCANGPCGKCLSVEDALGLGEPEGSGLPPGPVLEARYVARLSAAAVLYLSNPEGTCEDARAGLWASHADHLLALLESPKALTPGLSWLLQRMQARAAGQTPKMACVDIPQLLEEAVGAGAPGSAGGVLAALLDHVRSGSCFHALPSPQYFVDFVFQQHSSEVPMTLAELSALMQRLGVGREAHSDHSHRHRGASSRDPVPLISSSNSSSVWDTVCLSARDVMAAYGLSEQAGVTPEAWAQLSPALLQQQLSGACTSQSRPPVQDQLSQSERYLYGSLATLLICLCAVFGLLLLTCTGCRGVTHYILQTFLSLAVGAVTGDAVLHLTPKVLGLHTHSEEGLSPQPTWRLLAMLAGLYAFFLFENLFNLLLPRDPEDLEDGPCGHSSHSHGGHSHGVSLQLAPSELRQPKPPHEGSRADLVAEESPELLNPEPRRLSPELRLLPYMITLGDAVHNFADGLAVGAAFASSWKTGLATSLAVFCHELPHELGDFAALLHAGLSVRQALLLNLASALTAFAGLYVALAVGVSEESEAWILAVATGLFLYVALCDMLPAMLKVRDPRPWLLFLLHNVGLLGGWTVLLLLSLYEDDITF.

The signal sequence occupies residues 1–22 (MASLVSLELGLLLAVLVVTATA). Topologically, residues 23 to 327 (SPPAGLLSLL…QDQLSQSERY (305 aa)) are extracellular. Intrachain disulfides connect Cys-57-Cys-62, Cys-65-Cys-111, and Cys-160-Cys-195. Residues 236–255 (EAHSDHSHRHRGASSRDPVP) form a disordered region. Residue Asn-261 is glycosylated (N-linked (GlcNAc...) asparagine). An intrachain disulfide couples Cys-270 to Cys-309. Residues 328–348 (LYGSLATLLICLCAVFGLLLL) traverse the membrane as a helical segment. Topologically, residues 349–359 (TCTGCRGVTHY) are cytoplasmic. The helical transmembrane segment at 360–380 (ILQTFLSLAVGAVTGDAVLHL) threads the bilayer. The Extracellular portion of the chain corresponds to 381–402 (TPKVLGLHTHSEEGLSPQPTWR). Residues 403–423 (LLAMLAGLYAFFLFENLFNLL) form a helical membrane-spanning segment. Residues 424–498 (LPRDPEDLED…LSPELRLLPY (75 aa)) lie on the Cytoplasmic side of the membrane. Residues 452 to 454 (LQL) carry the Essential for SLC39A4 endocytosis motif. A disordered region spans residues 458-484 (ELRQPKPPHEGSRADLVAEESPELLNP). Positions 460–470 (RQPKPPHEGSR) are enriched in basic and acidic residues. The helical transmembrane segment at 499–518 (MITLGDAVHNFADGLAVGAA) threads the bilayer. His-507, Asn-508, and Asp-511 together coordinate Zn(2+). At 519 to 526 (FASSWKTG) the chain is on the extracellular side. The chain crosses the membrane as a helical span at residues 527–553 (LATSLAVFCHELPHELGDFAALLHAGL). His-536, Glu-537, and His-540 together coordinate Zn(2+). Residues 554-558 (SVRQA) are Cytoplasmic-facing. The chain crosses the membrane as a helical span at residues 559-579 (LLLNLASALTAFAGLYVALAV). Residues 580 to 586 (GVSEESE) lie on the Extracellular side of the membrane. A helical membrane pass occupies residues 587-607 (AWILAVATGLFLYVALCDMLP). The Cytoplasmic segment spans residues 608–617 (AMLKVRDPRP). Residues 618–638 (WLLFLLHNVGLLGGWTVLLLL) traverse the membrane as a helical segment. Residues 639-647 (SLYEDDITF) lie on the Extracellular side of the membrane.

It belongs to the ZIP transporter (TC 2.A.5) family. As to quaternary structure, homodimer; homodimerization is mediated by the transmembrane domain. Post-translationally, the extracellular N-terminal ectodomain is cleaved when cells are Zn(2+) deficient, N-terminally cleaved SLC39A4 is internalized at a faster rate. In terms of processing, under excess Zn(2+) conditions, SLC39A4 on the cell surface is rapidly endocytosed, ubiquitinated and degraded. Glycosylated. In terms of tissue distribution, highly expressed in kidney, small intestine, stomach, colon, jejunum and duodenum.

It is found in the cell membrane. It localises to the recycling endosome membrane. The protein localises to the apical cell membrane. It catalyses the reaction Zn(2+)(in) = Zn(2+)(out). The Zn(2+) uniporter activity is regulated by zinc availability. Extracellular acidification stimulated SLC39A4-dependent Zn(2+) uptake. Selective transporter that mediates the uptake of Zn(2+). Plays an essential role for dietary zinc uptake from small intestine. The Zn(2+) uniporter activity is regulated by zinc availability. Also exhibits polyspecific binding and transport of Cu(2+), Cd(2+) and possibly Ni(2+) but at higher concentrations. In Homo sapiens (Human), this protein is Zinc transporter ZIP4.